A 217-amino-acid chain; its full sequence is Peptide methionine sulfoxide reductase MsrA (217 aa).

Residue Cys-56 is part of the active site.

The protein belongs to the MsrA Met sulfoxide reductase family.

The enzyme catalyses L-methionyl-[protein] + [thioredoxin]-disulfide + H2O = L-methionyl-(S)-S-oxide-[protein] + [thioredoxin]-dithiol. The catalysed reaction is [thioredoxin]-disulfide + L-methionine + H2O = L-methionine (S)-S-oxide + [thioredoxin]-dithiol. Has an important function as a repair enzyme for proteins that have been inactivated by oxidation. Catalyzes the reversible oxidation-reduction of methionine sulfoxide in proteins to methionine. The protein is Peptide methionine sulfoxide reductase MsrA of Corynebacterium melassecola.